Consider the following 261-residue polypeptide: uncharacterized protein (261 aa).

22–46 serves as a coordination point for NADP(+); it reads IVTGGNSGLGQAFAMALAKAGANIF. Residue S153 participates in substrate binding. Y166 functions as the Proton acceptor in the catalytic mechanism.

This sequence belongs to the short-chain dehydrogenases/reductases (SDR) family.

This is an uncharacterized protein from Escherichia coli (strain K12).